A 173-amino-acid chain; its full sequence is Shikimate kinase (173 aa).

Residue 16 to 21 participates in ATP binding; it reads GSGKTT. Threonine 20 is a binding site for Mg(2+). Positions 38, 62, and 83 each coordinate substrate. Arginine 120 serves as a coordination point for ATP. Arginine 139 is a substrate binding site. An ATP-binding site is contributed by arginine 156.

Belongs to the shikimate kinase family. As to quaternary structure, monomer. Mg(2+) serves as cofactor.

The protein resides in the cytoplasm. The enzyme catalyses shikimate + ATP = 3-phosphoshikimate + ADP + H(+). Its pathway is metabolic intermediate biosynthesis; chorismate biosynthesis; chorismate from D-erythrose 4-phosphate and phosphoenolpyruvate: step 5/7. Catalyzes the specific phosphorylation of the 3-hydroxyl group of shikimic acid using ATP as a cosubstrate. The chain is Shikimate kinase from Corynebacterium diphtheriae (strain ATCC 700971 / NCTC 13129 / Biotype gravis).